The following is a 204-amino-acid chain: MSNFTAKVPLSERMADVLISKDRWKDDEEGYLKVKYGLEIILINVMKFALVYGIALVTGLLLQTVTVHLSYLWLRRYSFGLHATKTLNCTLISLMMFVLAPFVFQNIPSNNWIVLGTFGFILLNMFLFAPADTESLPLIGEEHRKTLKRKAMIGTLILTGIALLIPFAEMKTLIMVGSLFQVISINPLTYKLLKRRYRNYEKYE.

Helical transmembrane passes span Tyr52–Leu74, Leu87–Ile107, Asn111–Ala131, and Leu156–Val176.

This sequence belongs to the AgrB family.

It localises to the cell membrane. In terms of biological role, may be involved in the proteolytic processing of a quorum sensing system signal molecule precursor. The chain is Putative AgrB-like protein from Listeria monocytogenes serotype 4b (strain CLIP80459).